The primary structure comprises 355 residues: UDP-N-acetylglucosamine--N-acetylmuramyl-(pentapeptide) pyrophosphoryl-undecaprenol N-acetylglucosamine transferase (355 aa).

UDP-N-acetyl-alpha-D-glucosamine contacts are provided by residues 12-14, Asn-124, Arg-160, Ser-192, Ile-243, 262-267, and Gln-287; these read TGG and ALTVCE.

It belongs to the glycosyltransferase 28 family. MurG subfamily.

The protein resides in the cell inner membrane. It carries out the reaction di-trans,octa-cis-undecaprenyl diphospho-N-acetyl-alpha-D-muramoyl-L-alanyl-D-glutamyl-meso-2,6-diaminopimeloyl-D-alanyl-D-alanine + UDP-N-acetyl-alpha-D-glucosamine = di-trans,octa-cis-undecaprenyl diphospho-[N-acetyl-alpha-D-glucosaminyl-(1-&gt;4)]-N-acetyl-alpha-D-muramoyl-L-alanyl-D-glutamyl-meso-2,6-diaminopimeloyl-D-alanyl-D-alanine + UDP + H(+). It functions in the pathway cell wall biogenesis; peptidoglycan biosynthesis. Functionally, cell wall formation. Catalyzes the transfer of a GlcNAc subunit on undecaprenyl-pyrophosphoryl-MurNAc-pentapeptide (lipid intermediate I) to form undecaprenyl-pyrophosphoryl-MurNAc-(pentapeptide)GlcNAc (lipid intermediate II). This is UDP-N-acetylglucosamine--N-acetylmuramyl-(pentapeptide) pyrophosphoryl-undecaprenol N-acetylglucosamine transferase from Haemophilus ducreyi (strain 35000HP / ATCC 700724).